The sequence spans 428 residues: Adenylosuccinate synthetase (428 aa).

GTP is bound by residues 12–18 (GDEGKGK) and 40–42 (GHT). Aspartate 13 serves as the catalytic Proton acceptor. Mg(2+) contacts are provided by aspartate 13 and glycine 40. Residues 13–16 (DEGK), 38–41 (NAGH), threonine 128, arginine 142, glutamine 223, threonine 238, and arginine 302 each bind IMP. Histidine 41 acts as the Proton donor in catalysis. Position 298-304 (298-304 (TTTGRPR)) interacts with substrate. GTP-binding positions include arginine 304, 330–332 (SID), and 412–414 (SVG).

It belongs to the adenylosuccinate synthetase family. Homodimer. Requires Mg(2+) as cofactor.

The protein localises to the cytoplasm. It catalyses the reaction IMP + L-aspartate + GTP = N(6)-(1,2-dicarboxyethyl)-AMP + GDP + phosphate + 2 H(+). It participates in purine metabolism; AMP biosynthesis via de novo pathway; AMP from IMP: step 1/2. In terms of biological role, plays an important role in the de novo pathway of purine nucleotide biosynthesis. Catalyzes the first committed step in the biosynthesis of AMP from IMP. The sequence is that of Adenylosuccinate synthetase from Streptococcus pneumoniae serotype 2 (strain D39 / NCTC 7466).